The primary structure comprises 2521 residues: Piezo-type mechanosensitive ion channel component 1 (2521 aa).

Over 1–12 (MEPHVLGAVLYW) the chain is Cytoplasmic. A helical transmembrane segment spans residues 13–25 (LLLPCALLAACLL). Topologically, residues 26–28 (RFS) are extracellular. Residues 29–44 (GLSLVYLLFLLLLPWF) form a helical membrane-spanning segment. The Cytoplasmic portion of the chain corresponds to 45-58 (PGPTRCGLQGHTGR). Residues 59-81 (LLRALLGLSLLFLVAHLALQICL) traverse the membrane as a helical segment. Residues 82 to 121 (HIVPRLDQLLGPSCSRWETLSRHIGVTRLDLKDIPNAIRL) lie on the Extracellular side of the membrane. Residues 122–138 (VAPDLGILVVSSVCLGI) form a helical membrane-spanning segment. The Cytoplasmic portion of the chain corresponds to 139–194 (CGRLARNTRQSPHPRELDDDERDVDASPTAGLQEAATLAPTRRSRLAARFRVTAHW). The chain crosses the membrane as a helical span at residues 195 to 214 (LLVAAGRVLAVTLLALAGIA). Residues 215 to 216 (HP) are Extracellular-facing. The chain crosses the membrane as a helical span at residues 217 to 236 (SALSSVYLLLFLALCTWWAC). Over 237–247 (HFPISTRGFSR) the chain is Cytoplasmic. Residues 248–268 (LCVAVGCFGAGHLICLYCYQM) traverse the membrane as a helical segment. The Extracellular segment spans residues 269-309 (PLAQALLPPAGIWARVLGLKDFVGPTNCSSPHALVLNTGLD). N-linked (GlcNAc...) asparagine glycosylation occurs at Asn-295. Residues 310 to 330 (WPVYASPGVLLLLCYATASLR) traverse the membrane as a helical segment. Residues 331–417 (KLRAYRPSGQ…EASPLHSLGH (87 aa)) lie on the Cytoplasmic side of the membrane. Residues 418–438 (LIMDQSYVCALIAMMVWSITY) traverse the membrane as a helical segment. The Extracellular segment spans residues 439-440 (HS). The helical transmembrane segment at 441–456 (WLTFVLLLWACLIWTV) threads the bilayer. The Cytoplasmic portion of the chain corresponds to 457 to 461 (RSRHQ). A helical membrane pass occupies residues 462–484 (LAMLCSPCILLYGMTLCCLRYVW). Topologically, residues 485–512 (AMDLRPELPTTLGPVSLRQLGLEHTRYP) are extracellular. Residues 513 to 530 (CLDLGAMLLYTLTFWLLL) traverse the membrane as a helical segment. The Cytoplasmic portion of the chain corresponds to 531 to 574 (RQFVKEKLLKWAESPAALTEVTVADTEPTRTQTLLQSLGELVKG). Residues 575–595 (VYAKYWIYVCAGMFIVVSFAG) form a helical membrane-spanning segment. Residue Arg-596 is a topological domain, extracellular. The chain crosses the membrane as a helical span at residues 597–617 (LVVYKIVYMFLFLLCLTLFQV). Over 618-627 (YYSLWRKLLK) the chain is Cytoplasmic. Residues 628–649 (AFWWLVVAYTMLVLIAVYTFQF) form a helical membrane-spanning segment. At 650–679 (QDFPAYWRNLTGFTDEQLGDLGLEQFSVSE) the chain is on the extracellular side. The helical transmembrane segment at 680–696 (LFSSILVPGFFLLACIL) threads the bilayer. At 697-816 (QLHYFHRPFM…RRLLELHVFK (120 aa)) the chain is on the cytoplasmic side. A Phosphothreonine modification is found at Thr-734. Residues 738 to 769 (REEQQEHQQQQQEEEEEEEDSRDEGLGVATPH) are disordered. Residues 749-759 (QEEEEEEEDSR) are compositionally biased toward acidic residues. A Phosphoserine modification is found at Ser-758. Residues 817 to 828 (LVALYTVWVALK) traverse the membrane as a helical segment. The Extracellular portion of the chain corresponds to 829–831 (EVS). The chain crosses the membrane as a helical span at residues 832–845 (VMNLLLVVLWAFAL). Residues 846-859 (PYPRFRPMASCLST) are Cytoplasmic-facing. Residues 860-874 (VWTCVIIVCKMLYQL) form a helical membrane-spanning segment. Residues 875–926 (KVVNPQEYSSNCTEPFPNSTNLLPTEISQSLLYRGPVDPANWFGVRKGFPNL) lie on the Extracellular side of the membrane. The helical transmembrane segment at 927-954 (GYIQNHLQVLLLLVFEAIVYRRQEHYRR) threads the bilayer. Over 955 to 994 (QHQLAPLPAQAVFASGTRQQLDQDLLGCLKYFINFFFYKF) the chain is Cytoplasmic. Residues 995–1010 (GLEICFLMAVNVIGQR) traverse the membrane as a helical segment. Topologically, residues 1011 to 1012 (MN) are extracellular. Residues 1013-1028 (FLVTLHGCWLVAILTR) traverse the membrane as a helical segment. Residues 1029-1041 (RHRQAIARLWPNY) lie on the Cytoplasmic side of the membrane. A helical transmembrane segment spans residues 1042–1057 (CLFLALFLLYQYLLCL). Residues 1058–1096 (GMPPALCIDYPWRWSRAVPMNSALIKWLYLPDFFRAPNS) lie on the Extracellular side of the membrane. Residues 1097 to 1118 (TNLISDFLLLLCASQQWQVFSA) form a helical membrane-spanning segment. Over 1119-1153 (ERTEEWQRMAGVNTDRLEPLRGEPNPVPNFIHCRS) the chain is Cytoplasmic. A helical membrane pass occupies residues 1154–1180 (YLDMLKVAVFRYLFWLVLVVVFVTGAT). At 1181–1185 (RISIF) the chain is on the extracellular side. Residues 1186 to 1204 (GLGYLLACFYLLLFGTALL) traverse the membrane as a helical segment. At 1205–1217 (QRDTRARLVLWDC) the chain is on the cytoplasmic side. Residues 1218–1236 (LILYNVTVIISKNMLSLLA) traverse the membrane as a helical segment. Topologically, residues 1237-1285 (CVFVEQMQTGFCWVIQLFSLVCTVKGYYDPKEMMDRDQDCLLPVEEAGI) are extracellular. The helical transmembrane segment at 1286–1302 (IWDSVCFFFLLLQRRVF) threads the bilayer. Over 1303–1656 (LSHYYLHVRA…ELLLDRRLRI (354 aa)) the chain is Cytoplasmic. Residues 1339-1368 (HRRIEEKSLAQLKRQMERIRAKQEKHRQGR) adopt a coiled-coil conformation. Disordered stretches follow at residues 1356–1402 (RIRA…RRQW), 1462–1498 (RQQE…EAAA), and 1576–1630 (TLPG…DPGE). Positions 1385 to 1398 (LEPGPDSPGGSSPP) are enriched in low complexity. Phosphoserine occurs at positions 1391 and 1396. Phosphoserine is present on residues Ser-1636 and Ser-1646. A helical membrane pass occupies residues 1657–1700 (PELEEAELFAEGQGRALRLLRAVYQCVAAHSELLCYFIIILNHM). At 1701–1704 (VTAS) the chain is on the extracellular side. The chain crosses the membrane as a helical span at residues 1705-1720 (AGSLVLPVLVFLWAML). At 1721–1728 (SIPRPSKR) the chain is on the cytoplasmic side. The chain crosses the membrane as a helical span at residues 1729 to 1747 (FWMTAIVFTEIAVVVKYLF). Residues 1748-1779 (QFGFFPWNSHVVLRRYENKPYFPPRILGLEKT) are Extracellular-facing. The helical transmembrane segment at 1780–1801 (DGYIKYDLVQLMALFFHRSQLL) threads the bilayer. Residues 1802–1960 (CYGLWDHEED…HTKYRAATDV (159 aa)) are Cytoplasmic-facing. The span at 1811 to 1822 (DSPSKEHDKSGE) shows a compositional bias: basic and acidic residues. The segment at 1811 to 1921 (DSPSKEHDKS…RPSRSGGRVR (111 aa)) is disordered. The residue at position 1854 (Thr-1854) is a Phosphothreonine. A compositionally biased stretch (basic and acidic residues) spans 1859 to 1868 (VELRPRDTRR). Basic residues predominate over residues 1869-1878 (ISLRFRRRKK). Residues 1890 to 1903 (EAEDREEEEGEEEK) are compositionally biased toward acidic residues. Residues 1904 to 1913 (EAPTGREKRP) show a composition bias toward basic and acidic residues. The chain crosses the membrane as a helical span at residues 1961-1980 (YALMFLADVVDFIIIIFGFW). Topologically, residues 1981-2000 (AFGKHSAATDITSSLSDDQV) are extracellular. A helical transmembrane segment spans residues 2001–2017 (PEAFLVMLLIQFSTMVV). Residues 2018 to 2031 (DRALYLRKTVLGKL) lie on the Cytoplasmic side of the membrane. A helical membrane pass occupies residues 2032-2052 (AFQVALVLAIHLWMFFILPAV). At 2053-2060 (TERMFNQN) the chain is on the extracellular side. A helical membrane pass occupies residues 2061–2076 (VVAQLWYFVKCIYFAL). Residues 2077–2176 (SAYQIRCGYP…KKKIVKYGMG (100 aa)) are Cytoplasmic-facing. A helical transmembrane segment spans residues 2177–2197 (GLIILFLIAIIWFPLLFMSLV). The Extracellular portion of the chain corresponds to 2198 to 2431 (RSVVGVVNQP…IFSDKVSPPS (234 aa)). N-linked (GlcNAc...) asparagine glycosylation occurs at Asn-2294. Cysteines 2411 and 2415 form a disulfide. Residues 2432–2452 (LGFLAGYGIMGLYVSIVLVIG) form a helical membrane-spanning segment. At 2453–2521 (KFVRGFFSEI…TMIKWTREKE (69 aa)) the chain is on the cytoplasmic side.

This sequence belongs to the PIEZO (TC 1.A.75) family. In terms of assembly, homotrimer; the homotrimer forms a propeller-shaped Piezo channel with a cation-ion conducting pore. Heterotrimeric interaction may occur between PIEZO1 and PIEZO2. Interacts with PKD2. Interacts with STOML3. Interacts with TMC1, TMC2, PCDH15 and CIB2; the interaction may be part of the MET complex. Interacts with MDFIC (via C-terminus); the interaction prolongs Piezo channel inactivation. Interacts with MDFI (via C-terminus); the interaction prolongs Piezo channel inactivation. As to expression, expressed in numerous tissues. In normal brain, expressed exclusively in neurons, not in astrocytes. In Alzheimer disease brains, expressed in about half of the activated astrocytes located around classical senile plaques. In Parkinson disease substantia nigra, not detected in melanin-containing neurons nor in activated astrocytes. Expressed in erythrocytes (at protein level). Expressed in myoblasts (at protein level).

The protein resides in the endoplasmic reticulum membrane. It localises to the endoplasmic reticulum-Golgi intermediate compartment membrane. Its subcellular location is the cell membrane. It is found in the cell projection. The protein localises to the lamellipodium membrane. The catalysed reaction is K(+)(in) = K(+)(out). It catalyses the reaction Na(+)(in) = Na(+)(out). It carries out the reaction Ca(2+)(in) = Ca(2+)(out). The enzyme catalyses Mg(2+)(in) = Mg(2+)(out). With respect to regulation, regulated by auxillary subunits MDFIC and MDFI. Down-regulated by phosphatidylserines exposed on the cell surface. Divalent ions decrease the single-channel permeability of K(+). In terms of biological role, pore-forming subunit of the mechanosensitive non-specific cation Piezo channel required for rapidly adapting mechanically activated (MA) currents and has a key role in sensing touch and tactile pain. Piezo channels are homotrimeric three-blade propeller-shaped structures that utilize a cap-motion and plug-and-latch mechanism to gate their ion-conducting pathways. Generates currents characterized by a linear current-voltage relationship that are sensitive to ruthenium red and gadolinium. Conductance to monovalent alkali ions is highest for K(+), intermediate for Na(+) and lowest for Li(+). Divalent ions except for Mn(2+) permeate the channel but more slowly than the monovalent ions and they also reduce K(+) currents. Plays a key role in epithelial cell adhesion by maintaining integrin activation through R-Ras recruitment to the ER, most probably in its activated state, and subsequent stimulation of calpain signaling. In inner ear hair cells, PIEZO1/2 subunits may constitute part of the mechanotransducer (MET) non-selective cation channel complex where they may act as pore-forming ion-conducting component in the complex. In the kidney, may contribute to the detection of intraluminal pressure changes and to urine flow sensing. Acts as a shear-stress sensor that promotes endothelial cell organization and alignment in the direction of blood flow through calpain activation. Plays a key role in blood vessel formation and vascular structure in both development and adult physiology. Acts as a sensor of phosphatidylserine (PS) flipping at the plasma membrane and governs morphogenesis of muscle cells. In myoblasts, flippase-mediated PS enrichment at the inner leaflet of plasma membrane triggers channel activation and Ca2+ influx followed by Rho GTPases signal transduction, leading to assembly of cortical actomyosin fibers and myotube formation. The polypeptide is Piezo-type mechanosensitive ion channel component 1 (Homo sapiens (Human)).